Consider the following 1201-residue polypeptide: ATP-dependent helicase/deoxyribonuclease subunit B (1201 aa).

This sequence belongs to the helicase family. AddB/RexB type 2 subfamily. As to quaternary structure, heterodimer of AddA and RexB. Requires Mg(2+) as cofactor.

In terms of biological role, the heterodimer acts as both an ATP-dependent DNA helicase and an ATP-dependent, dual-direction single-stranded exonuclease. Recognizes the chi site generating a DNA molecule suitable for the initiation of homologous recombination. This subunit has 5' -&gt; 3' nuclease activity but not helicase activity. In Levilactobacillus brevis (strain ATCC 367 / BCRC 12310 / CIP 105137 / JCM 1170 / LMG 11437 / NCIMB 947 / NCTC 947) (Lactobacillus brevis), this protein is ATP-dependent helicase/deoxyribonuclease subunit B.